The primary structure comprises 631 residues: 1-deoxy-D-xylulose-5-phosphate synthase (631 aa).

Thiamine diphosphate is bound by residues His-87 and 128–130; that span reads GHS. Asp-159 serves as a coordination point for Mg(2+). Residues 160–161, Asn-188, Phe-295, and Glu-378 contribute to the thiamine diphosphate site; that span reads GA. Asn-188 contributes to the Mg(2+) binding site.

Belongs to the transketolase family. DXPS subfamily. In terms of assembly, homodimer. Mg(2+) serves as cofactor. It depends on thiamine diphosphate as a cofactor.

The catalysed reaction is D-glyceraldehyde 3-phosphate + pyruvate + H(+) = 1-deoxy-D-xylulose 5-phosphate + CO2. It participates in metabolic intermediate biosynthesis; 1-deoxy-D-xylulose 5-phosphate biosynthesis; 1-deoxy-D-xylulose 5-phosphate from D-glyceraldehyde 3-phosphate and pyruvate: step 1/1. Functionally, catalyzes the acyloin condensation reaction between C atoms 2 and 3 of pyruvate and glyceraldehyde 3-phosphate to yield 1-deoxy-D-xylulose-5-phosphate (DXP). The sequence is that of 1-deoxy-D-xylulose-5-phosphate synthase from Pseudomonas syringae pv. tomato (strain ATCC BAA-871 / DC3000).